The primary structure comprises 321 residues: Homoserine O-acetyltransferase (321 aa).

Cys-142 functions as the Acyl-thioester intermediate in the catalytic mechanism. The substrate site is built by Lys-163 and Ser-192. His-235 (proton acceptor) is an active-site residue. Glu-237 is a catalytic residue. Substrate is bound at residue Arg-249.

The protein belongs to the MetA family.

The protein localises to the cytoplasm. The catalysed reaction is L-homoserine + acetyl-CoA = O-acetyl-L-homoserine + CoA. The protein operates within amino-acid biosynthesis; L-methionine biosynthesis via de novo pathway; O-acetyl-L-homoserine from L-homoserine: step 1/1. Its function is as follows. Transfers an acetyl group from acetyl-CoA to L-homoserine, forming acetyl-L-homoserine. The chain is Homoserine O-acetyltransferase from Lactococcus lactis subsp. lactis (strain IL1403) (Streptococcus lactis).